The primary structure comprises 1921 residues: Endoribonuclease Dicer (1921 aa).

Positions 51–227 constitute a Helicase ATP-binding domain; that stretch reads LLEAALDHNT…ELEEKIKKLE (177 aa). 64-71 serves as a coordination point for ATP; sequence LNTGSGKT. The DECH box motif lies at 175–178; the sequence is DECH. The segment at 409-433 is disordered; it reads YVSWSDSEDDDEDEEIEEKEKPETN. A compositionally biased stretch (acidic residues) spans 414-425; the sequence is DSEDDDEDEEIE. The Helicase C-terminal domain maps to 433 to 602; sequence NFPSPFTNIL…SVDTSETETE (170 aa). In terms of domain architecture, Dicer dsRNA-binding fold spans 630–722; sequence AIGHINRYCA…MPVGKETVKY (93 aa). Positions 727-746 are disordered; that stretch reads DLHDEEETSVPGRPGSTKRR. In terms of domain architecture, PAZ spans 895-1042; it reads KFMEDIEKSE…LVPELCAIHP (148 aa). The interval 1270 to 1289 is disordered; it reads NLSKDKVDSEKNTSSGYSSK. 2 RNase III domains span residues 1277–1404 and 1665–1823; these read DSEK…EETT and FENF…MDSG. Residues glutamate 1317, aspartate 1396, glutamate 1399, and glutamate 1704 each contribute to the Mg(2+) site. Residues 1782–1801 form a disordered region; the sequence is QGMDSELRRSEEDEEKEEDI. Positions 1809 and 1812 each coordinate Mg(2+). The DRBM domain maps to 1848–1913; it reads VPRSPVRELL…ARRALRSLKA (66 aa).

It belongs to the helicase family. Dicer subfamily. In terms of assembly, component of the RISC loading complex (RLC), or micro-RNA (miRNA) loading complex (miRLC), which is composed of DICER1, AGO2 and TARBP2; DICER1 and TARBP2 are required to process precursor miRNAs (pre-miRNAs) to mature miRNAs and then load them onto AGO2. Note that the trimeric RLC/miRLC is also referred to as RISC. The cofactor is Mg(2+). Mn(2+) is required as a cofactor.

It localises to the cytoplasm. It carries out the reaction Endonucleolytic cleavage to 5'-phosphomonoester.. In terms of biological role, double-stranded RNA (dsRNA) endoribonuclease playing a central role in short dsRNA-mediated post-transcriptional gene silencing. Cleaves naturally occurring long dsRNAs and short hairpin pre-microRNAs (miRNA) into fragments of twenty-one to twenty-three nucleotides with 3' overhang of two nucleotides, producing respectively short interfering RNAs (siRNA) and mature microRNAs. SiRNAs and miRNAs serve as guide to direct the RNA-induced silencing complex (RISC) to complementary RNAs to degrade them or prevent their translation. Gene silencing mediated by siRNAs, also called RNA interference, controls the elimination of transcripts from mobile and repetitive DNA elements of the genome but also the degradation of exogenous RNA of viral origin for instance. The miRNA pathway on the other side is a mean to specifically regulate the expression of target genes. The chain is Endoribonuclease Dicer (DICER1) from Gallus gallus (Chicken).